The sequence spans 1180 residues: Polyamine-transporting ATPase 13A2 (1180 aa).

At 1-44 (MSADSSPLVGSTPTGYGTLTIGTSIDPLSSSVSSVRLSGYCGSP) the chain is on the cytoplasmic side. An intramembrane segment occupies 45–65 (WRVIGYHVVVWMMAGIPLLLF). Residues 66 to 235 (RWKPLWGVRL…KSYPQLLVDE (170 aa)) lie on the Cytoplasmic side of the membrane. Serine 151 bears the Phosphoserine mark. The chain crosses the membrane as a helical span at residues 236–253 (ALNPYYGFQAFSIALWLA). Residues 254–256 (DHY) lie on the Lumenal side of the membrane. Residues 257-276 (YWYALCIFLISSISICLSLY) traverse the membrane as a helical segment. Residues 277–427 (KTRKQSQTLR…NFKFYKHSMK (151 aa)) are Cytoplasmic-facing. Residues 428 to 448 (FVAALSVLALLGTIYSIFILY) traverse the membrane as a helical segment. Topologically, residues 449-463 (RNRVPLNEIVIRALD) are lumenal. A helical membrane pass occupies residues 464 to 484 (LVTVVVPPALPAAMTVCTLYA). Topologically, residues 485-930 (QSRLRRQGIF…REGRCSLDTS (446 aa)) are cytoplasmic. Aspartate 513 serves as the catalytic 4-aspartylphosphate intermediate. Aspartate 878 and aspartate 882 together coordinate Mg(2+). A helical membrane pass occupies residues 931–951 (FSVFKYMALYSLTQFISVLIL). Residues 952–957 (YTINTN) lie on the Lumenal side of the membrane. The chain crosses the membrane as a helical span at residues 958-978 (LGDLQFLAIDLVITTTVAVLM). The Cytoplasmic portion of the chain corresponds to 979-994 (SRTGPALVLGRVRPPG). The helical transmembrane segment at 995-1015 (ALLSVPVLSSLLLQMVLVTGV) threads the bilayer. The Lumenal portion of the chain corresponds to 1016–1048 (QLGGYFLTLAQPWFVPLNRTVAAPDNLPNYENT). The N-linked (GlcNAc...) asparagine glycan is linked to asparagine 1033. Residues 1049–1069 (VVFSLSSFQYLILAAAVSKGA) traverse the membrane as a helical segment. Residues 1070–1080 (PFRRPLYTNVP) are Cytoplasmic-facing. Residues 1081–1101 (FLVALALLSSVLVGLVLVPGL) form a helical membrane-spanning segment. At 1102–1117 (LQGPLALRNITDTGFK) the chain is on the lumenal side. N-linked (GlcNAc...) asparagine glycosylation is present at asparagine 1110. The chain crosses the membrane as a helical span at residues 1118-1138 (LLLLGLVTLNFVGAFMLESVL). The Cytoplasmic segment spans residues 1139–1180 (DQCLPACLRRLRPKRASKKRFKQLERELAEQPWPPLPAGPLR).

It belongs to the cation transport ATPase (P-type) (TC 3.A.3) family. Type V subfamily. In terms of assembly, interacts with MYCBP2; the interaction inhibits the ubiquitination of TSC2 by MYCBP2. Interacts with HDAC6; the interaction results in recruitment of HDAC6 to lysosomes to promote CTTN deacetylation. Autophosphorylated. Accumulates in an inactive autophosphorylated state and autophosphorylation is stimulated by phosphatidic acid and phosphatidylinositol 3,5-bisphosphate but not by Mn(2+) or Zn(2+). The presence of spermine results in a dose-dependent reduction in autophosphorylation. Expressed in brain; protein levels are markedly increased in brain from subjects with Parkinson disease and subjects with dementia with Lewy bodies. Detected in pyramidal neurons located throughout the cingulate cortex (at protein level). In the substantia nigra, it is found in neuromelanin-positive dopaminergic neurons (at protein level).

The protein localises to the lysosome membrane. It is found in the late endosome membrane. The protein resides in the endosome. It localises to the multivesicular body membrane. Its subcellular location is the cytoplasmic vesicle. The protein localises to the autophagosome membrane. The catalysed reaction is spermidine(out) + ATP + H2O = spermidine(in) + ADP + phosphate + H(+). It catalyses the reaction spermine(out) + ATP + H2O = spermine(in) + ADP + phosphate + H(+). Its activity is regulated as follows. Accumulates in an inactive autophosphorylated state. The presence of spermine results in a dose-dependent reduction in autophosphorylation. ATPase which acts as a lysosomal polyamine exporter with high affinity for spermine. Also stimulates cellular uptake of polyamines and protects against polyamine toxicity. Plays a role in intracellular cation homeostasis and the maintenance of neuronal integrity. Contributes to cellular zinc homeostasis. Confers cellular protection against Mn(2+) and Zn(2+) toxicity and mitochondrial stress. Required for proper lysosomal and mitochondrial maintenance. Regulates the autophagy-lysosome pathway through the control of SYT11 expression at both transcriptional and post-translational levels. Facilitates recruitment of deacetylase HDAC6 to lysosomes to deacetylate CTTN, leading to actin polymerization, promotion of autophagosome-lysosome fusion and completion of autophagy. Promotes secretion of exosomes as well as secretion of SCNA via exosomes. Plays a role in lipid homeostasis. The chain is Polyamine-transporting ATPase 13A2 from Homo sapiens (Human).